The chain runs to 300 residues: Bifunctional protein FolD (300 aa).

NADP(+) is bound by residues 169–171, S196, and I237; that span reads GRG.

The protein belongs to the tetrahydrofolate dehydrogenase/cyclohydrolase family. Homodimer.

It carries out the reaction (6R)-5,10-methylene-5,6,7,8-tetrahydrofolate + NADP(+) = (6R)-5,10-methenyltetrahydrofolate + NADPH. It catalyses the reaction (6R)-5,10-methenyltetrahydrofolate + H2O = (6R)-10-formyltetrahydrofolate + H(+). It functions in the pathway one-carbon metabolism; tetrahydrofolate interconversion. Functionally, catalyzes the oxidation of 5,10-methylenetetrahydrofolate to 5,10-methenyltetrahydrofolate and then the hydrolysis of 5,10-methenyltetrahydrofolate to 10-formyltetrahydrofolate. The chain is Bifunctional protein FolD from Clavibacter sepedonicus (Clavibacter michiganensis subsp. sepedonicus).